We begin with the raw amino-acid sequence, 548 residues long: Probable 5-epi-aristolochene synthase 4 (548 aa).

5 residues coordinate Mg(2+): Asp301, Asp305, Asp444, Thr448, and Glu452. Residues 301–305 carry the DDXXD motif motif; the sequence is DDTFD.

Belongs to the terpene synthase family. Monomer. Requires Mg(2+) as cofactor.

Its subcellular location is the cytoplasm. The enzyme catalyses (2E,6E)-farnesyl diphosphate = (+)-5-epi-aristolochene + diphosphate. It functions in the pathway secondary metabolite biosynthesis; terpenoid biosynthesis. Its function is as follows. Catalyzes the cyclization of trans,trans-farnesyl diphosphate (FPP) to the bicyclic intermediate 5-epi-aristolochene, initial step in the conversion of FPP to the sesquiterpenoid antifungal phytoalexin capsidiol. Produces germacrene A as an enzyme-bound intermediate that is not released by the enzyme, but is further cyclized to produce the bicyclic 5-epi-aristolochene. The sequence is that of Probable 5-epi-aristolochene synthase 4 from Nicotiana attenuata (Coyote tobacco).